We begin with the raw amino-acid sequence, 253 residues long: U2 small nuclear ribonucleoprotein A' (253 aa).

LRR repeat units follow at residues 19 to 40 (KDRE…GIAK), 41 to 62 (DQDA…PFFP), 63 to 84 (RLHT…IAST), and 87 to 108 (NLTT…DPLR). The LRRCT domain maps to 121–159 (NPVTRKEHYRYWVIWRIPSVRFLDYQKVKDAERAKAKEL). The tract at residues 228-253 (ELNEGRIPGGALDAGEDSEDENQMQT) is disordered. A compositionally biased stretch (acidic residues) spans 241 to 253 (AGEDSEDENQMQT).

The protein belongs to the U2 small nuclear ribonucleoprotein A family. As to quaternary structure, associated with the spliceosome.

Its subcellular location is the nucleus. Involved in pre-mRNA splicing. The protein is U2 small nuclear ribonucleoprotein A' (lea1) of Aspergillus fumigatus (strain ATCC MYA-4609 / CBS 101355 / FGSC A1100 / Af293) (Neosartorya fumigata).